The chain runs to 205 residues: Recombination protein RecR (205 aa).

Residues C58–C73 form a C4-type zinc finger. Positions R81 to P177 constitute a Toprim domain.

It belongs to the RecR family.

May play a role in DNA repair. It seems to be involved in an RecBC-independent recombinational process of DNA repair. It may act with RecF and RecO. This is Recombination protein RecR from Cytophaga hutchinsonii (strain ATCC 33406 / DSM 1761 / CIP 103989 / NBRC 15051 / NCIMB 9469 / D465).